The primary structure comprises 166 residues: Olee1-like protein (166 aa).

The first 23 residues, 1–23, serve as a signal peptide directing secretion; it reads MAKSIIIQAPALCFLSLLGFAYS. 3 disulfide bridges follow: cysteine 35/cysteine 106, cysteine 38/cysteine 150, and cysteine 59/cysteine 94.

Belongs to the Ole e I family.

The protein localises to the secreted. This chain is Olee1-like protein, found in Betula pendula (European white birch).